Here is a 204-residue protein sequence, read N- to C-terminus: uncharacterized protein (204 aa).

As to expression, component of the acid-soluble organic matrix of the aragonitic skeleton (at protein level).

It localises to the secreted. This is an uncharacterized protein from Acropora millepora (Staghorn coral).